Reading from the N-terminus, the 382-residue chain is Hyaluronidase (382 aa).

Positions 1–28 form a signal peptide, or 24; it reads MSRPLVITEGMMIGVLLMLAPINALLLG. A propeptide spanning residues 29–33 is cleaved from the precursor; sequence FVQST. 2 disulfide bridges follow: C54–C345 and C221–C233. N-linked (GlcNAc...) asparagine glycosylation occurs at N115. The active-site Proton donor is E145. N-linked (GlcNAc...) (complex) asparagine glycosylation is present at N263.

This sequence belongs to the glycosyl hydrolase 56 family. Homotetramer. Post-translationally, N-glycosylated. Glycans found include a majority of small oligosaccharides (Man1-3GlcNAc2), most of which are either alpha 1,3-monofucosylated or alpha 1,3-(alpha 1,6-)difucosylated at the innermost GlcNAc residue, approximately 5% of high-mannose type structures, and 8% contains the terminal trisaccharide GalNAc beta 1-4[Fuc alpha 1-3]GlcNAc beta 1-in beta 1,2-linkage to the core alpha 1,3-mannosyl residue. In terms of tissue distribution, expressed in the venom glands of worker bees. It is also detected in the testes of drones but not in the queen-bee venom glands or in pupae.

Its subcellular location is the secreted. The catalysed reaction is Random hydrolysis of (1-&gt;4)-linkages between N-acetyl-beta-D-glucosamine and D-glucuronate residues in hyaluronate.. In terms of biological role, hydrolyzes high molecular weight hyaluronic acid to produce small oligosaccharides. This chain is Hyaluronidase, found in Apis mellifera (Honeybee).